We begin with the raw amino-acid sequence, 33 residues long: Photosystem II reaction center protein Psb30 (33 aa).

The helical transmembrane segment at 5-25 (VIAQLIALALIVGSGPLVIAL) threads the bilayer.

The protein belongs to the Psb30/Ycf12 family. As to quaternary structure, PSII is composed of 1 copy each of membrane proteins PsbA, PsbB, PsbC, PsbD, PsbE, PsbF, PsbH, PsbI, PsbJ, PsbK, PsbL, PsbM, PsbT, PsbX, PsbY, PsbZ, Psb30/Ycf12, peripheral proteins of the oxygen-evolving complex and a large number of cofactors. It forms dimeric complexes.

It localises to the plastid. The protein resides in the chloroplast thylakoid membrane. In terms of biological role, a core subunit of photosystem II (PSII), probably helps stabilize the reaction center. The sequence is that of Photosystem II reaction center protein Psb30 from Physcomitrium patens (Spreading-leaved earth moss).